The primary structure comprises 73 residues: Large ribosomal subunit protein bL28 (73 aa).

Belongs to the bacterial ribosomal protein bL28 family.

The polypeptide is Large ribosomal subunit protein bL28 (Fervidobacterium nodosum (strain ATCC 35602 / DSM 5306 / Rt17-B1)).